The primary structure comprises 456 residues: Taurine--pyruvate aminotransferase (456 aa).

Lys-280 is modified (N6-(pyridoxal phosphate)lysine).

This sequence belongs to the class-III pyridoxal-phosphate-dependent aminotransferase family. As to quaternary structure, homotetramer. Pyridoxal 5'-phosphate serves as cofactor.

It catalyses the reaction taurine + pyruvate = sulfoacetaldehyde + L-alanine. Its pathway is organosulfur degradation; alkanesulfonate degradation. In terms of biological role, involved in an anaerobic respiration pathway that converts the sulfonate taurine (2-aminoethanesulfonate) to ammonia, acetate and sulfide. Catalyzes the initial metabolic reaction of anaerobic taurine degradation, i.e. the transamination reaction between taurine and pyruvate leading to sulfoacetaldehyde and alanine. The sequence is that of Taurine--pyruvate aminotransferase from Bilophila wadsworthia (strain 3_1_6).